A 187-amino-acid chain; its full sequence is MASSVMSTATVATGANAAQASMIASFNGLKSAASFPVTRKQDLDITSIASNGGRVECMLVWPPINKKKYETLSYLPDLSDEQLLKEIEYLLQKGWVPCLEFETEHGFVYREHHRSPGYYDGRYWTMWKLPMFGCTDATQVLNEVQEAKKAYPQAWIRIIGFDNVRQVQCISFIAYKPEATKFSMFNV.

The N-terminal 56 residues, Met1–Glu56, are a transit peptide targeting the chloroplast.

Belongs to the RuBisCO small chain family. As to quaternary structure, heterohexadecamer of 8 large and 8 small subunits.

The protein resides in the plastid. The protein localises to the chloroplast. Functionally, ruBisCO catalyzes two reactions: the carboxylation of D-ribulose 1,5-bisphosphate, the primary event in carbon dioxide fixation, as well as the oxidative fragmentation of the pentose substrate. Both reactions occur simultaneously and in competition at the same active site. Although the small subunit is not catalytic it is essential for maximal activity. The protein is Ribulose bisphosphate carboxylase small subunit, chloroplastic of Capsicum annuum (Capsicum pepper).